Reading from the N-terminus, the 462-residue chain is Bifunctional protein GlmU (462 aa).

Residues 1–235 (MSYINFSAII…TFEIMGVNSK (235 aa)) are pyrophosphorylase. Residues 11–14 (LAAG), K25, Q80, 85–86 (GT), 107–109 (YGD), G144, E159, and N233 each bind UDP-N-acetyl-alpha-D-glucosamine. D109 is a binding site for Mg(2+). Mg(2+) is bound at residue N233. The segment at 236-256 (SDFVDLDKQYQQRKVQCLLSS) is linker. The segment at 257–462 (GLMIIDPNRF…LNWKRLKNKK (206 aa)) is N-acetyltransferase. UDP-N-acetyl-alpha-D-glucosamine contacts are provided by R339 and K357. The active-site Proton acceptor is the H369. UDP-N-acetyl-alpha-D-glucosamine is bound by residues Y372 and N383. Residues A386, 392–393 (NY), A429, and R446 each bind acetyl-CoA.

It in the N-terminal section; belongs to the N-acetylglucosamine-1-phosphate uridyltransferase family. In the C-terminal section; belongs to the transferase hexapeptide repeat family. In terms of assembly, homotrimer. Mg(2+) serves as cofactor.

The protein resides in the cytoplasm. It carries out the reaction alpha-D-glucosamine 1-phosphate + acetyl-CoA = N-acetyl-alpha-D-glucosamine 1-phosphate + CoA + H(+). It catalyses the reaction N-acetyl-alpha-D-glucosamine 1-phosphate + UTP + H(+) = UDP-N-acetyl-alpha-D-glucosamine + diphosphate. The protein operates within nucleotide-sugar biosynthesis; UDP-N-acetyl-alpha-D-glucosamine biosynthesis; N-acetyl-alpha-D-glucosamine 1-phosphate from alpha-D-glucosamine 6-phosphate (route II): step 2/2. Its pathway is nucleotide-sugar biosynthesis; UDP-N-acetyl-alpha-D-glucosamine biosynthesis; UDP-N-acetyl-alpha-D-glucosamine from N-acetyl-alpha-D-glucosamine 1-phosphate: step 1/1. It participates in bacterial outer membrane biogenesis; LPS lipid A biosynthesis. Its function is as follows. Catalyzes the last two sequential reactions in the de novo biosynthetic pathway for UDP-N-acetylglucosamine (UDP-GlcNAc). The C-terminal domain catalyzes the transfer of acetyl group from acetyl coenzyme A to glucosamine-1-phosphate (GlcN-1-P) to produce N-acetylglucosamine-1-phosphate (GlcNAc-1-P), which is converted into UDP-GlcNAc by the transfer of uridine 5-monophosphate (from uridine 5-triphosphate), a reaction catalyzed by the N-terminal domain. This Blochmanniella pennsylvanica (strain BPEN) protein is Bifunctional protein GlmU.